A 331-amino-acid polypeptide reads, in one-letter code: Malate dehydrogenase (331 aa).

Position 14–20 (14–20 (GAAGSIG)) interacts with NAD(+). Substrate-binding residues include Arg95 and Arg101. Residues Asn108, Gln115, and 132-134 (VGN) contribute to the NAD(+) site. Residues Asn134 and Arg165 each coordinate substrate. His190 serves as the catalytic Proton acceptor.

The protein belongs to the LDH/MDH superfamily. MDH type 2 family.

The enzyme catalyses (S)-malate + NAD(+) = oxaloacetate + NADH + H(+). Catalyzes the reversible oxidation of malate to oxaloacetate. The chain is Malate dehydrogenase from Rhodococcus jostii (strain RHA1).